The primary structure comprises 261 residues: Glucosamine-6-phosphate deaminase (261 aa).

D67 acts as the Proton acceptor; for enolization step in catalysis. D136 (for ring-opening step) is an active-site residue. Catalysis depends on H138, which acts as the Proton acceptor; for ring-opening step. E143 serves as the catalytic For ring-opening step.

Belongs to the glucosamine/galactosamine-6-phosphate isomerase family. NagB subfamily.

The catalysed reaction is alpha-D-glucosamine 6-phosphate + H2O = beta-D-fructose 6-phosphate + NH4(+). The protein operates within amino-sugar metabolism; N-acetylneuraminate degradation; D-fructose 6-phosphate from N-acetylneuraminate: step 5/5. Functionally, catalyzes the reversible isomerization-deamination of glucosamine 6-phosphate (GlcN6P) to form fructose 6-phosphate (Fru6P) and ammonium ion. This is Glucosamine-6-phosphate deaminase from Mycolicibacterium smegmatis (strain ATCC 700084 / mc(2)155) (Mycobacterium smegmatis).